Here is a 101-residue protein sequence, read N- to C-terminus: Small ribosomal subunit protein uS14 (101 aa).

Belongs to the universal ribosomal protein uS14 family. As to quaternary structure, part of the 30S ribosomal subunit. Contacts proteins S3 and S10.

Functionally, binds 16S rRNA, required for the assembly of 30S particles and may also be responsible for determining the conformation of the 16S rRNA at the A site. This chain is Small ribosomal subunit protein uS14, found in Paraburkholderia phytofirmans (strain DSM 17436 / LMG 22146 / PsJN) (Burkholderia phytofirmans).